A 343-amino-acid polypeptide reads, in one-letter code: Protein RecA (343 aa).

Residue 66-73 (GPESSGKT) coordinates ATP. A disordered region spans residues 319–343 (IERQIREKHLPKRSAKADEAESAEA).

This sequence belongs to the RecA family.

It localises to the cytoplasm. In terms of biological role, can catalyze the hydrolysis of ATP in the presence of single-stranded DNA, the ATP-dependent uptake of single-stranded DNA by duplex DNA, and the ATP-dependent hybridization of homologous single-stranded DNAs. It interacts with LexA causing its activation and leading to its autocatalytic cleavage. This Thioalkalivibrio sulfidiphilus (strain HL-EbGR7) protein is Protein RecA.